Here is a 128-residue protein sequence, read N- to C-terminus: Large ribosomal subunit protein bL20c (128 aa).

The protein belongs to the bacterial ribosomal protein bL20 family.

Its subcellular location is the plastid. It is found in the chloroplast. In terms of biological role, binds directly to 23S ribosomal RNA and is necessary for the in vitro assembly process of the 50S ribosomal subunit. It is not involved in the protein synthesizing functions of that subunit. The protein is Large ribosomal subunit protein bL20c of Gossypium barbadense (Sea Island cotton).